The primary structure comprises 534 residues: Zinc finger protein 69 homolog B (534 aa).

Residues lysine 37 and lysine 40 each participate in a glycyl lysine isopeptide (Lys-Gly) (interchain with G-Cter in SUMO2) cross-link. The region spanning 74–145 (LTFKDVSVDF…ERDISGVPSS (72 aa)) is the KRAB domain. Residues lysine 178 and lysine 235 each participate in a glycyl lysine isopeptide (Lys-Gly) (interchain with G-Cter in SUMO2) cross-link. C2H2-type zinc fingers lie at residues 279-301 (FECNICEKIFKQLIHLTEHMRIH), 307-329 (FRCKECGKAFSQSSSLIPHQRIH), 335-357 (YECKECGKTFRHPSSLTQHVRIH), 363-385 (YECRVCEKAFSQSIGLIQHLRTH), 391-413 (FTCKDCGKAFFQIRHLRQHEIIH), 419-441 (YICNVCSKTFSHSTYLTQHQRTH), 447-469 (YKCKECGKAFSQRIHLSIHQRVH), 475-497 (YECSHCGKAFRHDSSFAKHQRIH), and 503-525 (YDCNECGKAFSCSSSLIRHCKTH).

It belongs to the krueppel C2H2-type zinc-finger protein family.

It is found in the nucleus. Its function is as follows. May be involved in transcriptional regulation. Essential for Golgi structural integrity. This Homo sapiens (Human) protein is Zinc finger protein 69 homolog B (ZFP69B).